Here is a 61-residue protein sequence, read N- to C-terminus: Large ribosomal subunit protein uL30 (61 aa).

Belongs to the universal ribosomal protein uL30 family. As to quaternary structure, part of the 50S ribosomal subunit.

The protein is Large ribosomal subunit protein uL30 of Mycobacterium sp. (strain KMS).